The following is a 31-amino-acid chain: uncharacterized protein (31 aa).

Residues 7-29 (TVVLINFFAAVGLFTLISMRFGW) form a helical membrane-spanning segment.

The protein resides in the cell inner membrane. This is an uncharacterized protein from Escherichia coli (strain K12).